Consider the following 376-residue polypeptide: Erythronate-4-phosphate dehydrogenase (376 aa).

The substrate site is built by serine 45 and threonine 67. Residue aspartate 147 coordinates NAD(+). Arginine 209 is an active-site residue. NAD(+) is bound at residue aspartate 233. Glutamate 238 is a catalytic residue. Histidine 255 acts as the Proton donor in catalysis. Residue glycine 258 coordinates NAD(+). Tyrosine 259 contacts substrate.

Belongs to the D-isomer specific 2-hydroxyacid dehydrogenase family. PdxB subfamily. As to quaternary structure, homodimer.

Its subcellular location is the cytoplasm. The catalysed reaction is 4-phospho-D-erythronate + NAD(+) = (R)-3-hydroxy-2-oxo-4-phosphooxybutanoate + NADH + H(+). It functions in the pathway cofactor biosynthesis; pyridoxine 5'-phosphate biosynthesis; pyridoxine 5'-phosphate from D-erythrose 4-phosphate: step 2/5. Catalyzes the oxidation of erythronate-4-phosphate to 3-hydroxy-2-oxo-4-phosphonooxybutanoate. This Shewanella loihica (strain ATCC BAA-1088 / PV-4) protein is Erythronate-4-phosphate dehydrogenase.